Reading from the N-terminus, the 2690-residue chain is Non-reducing polyketide synthase pigA (2690 aa).

The 116-residue stretch at 96-211 folds into the Starter acyltransferase (SAT) domain; that stretch reads NILLSPLVVI…AELSRVLQDF (116 aa). Catalysis depends on cysteine 140, which acts as the Nucleophile; for transacylase activity. Catalysis depends on histidine 258, which acts as the Proton donor/acceptor; for transacylase activity. Positions 388 to 804 constitute a Ketosynthase family 3 (KS3) domain; it reads ENDIAVIGMS…GSNASLIVTQ (417 aa). Catalysis depends on for beta-ketoacyl synthase activity residues cysteine 553, histidine 688, and histidine 727. The Malonyl-CoA:ACP transacylase (MAT) domain maps to 915-1182; the sequence is FGGQISTFVG…VQRLAKQHPS (268 aa). The tract at residues 1296–1426 is N-terminal hotdog fold; the sequence is LTFVGYQDKD…GKVFFRSVDD (131 aa). The region spanning 1296–1602 is the PKS/mFAS DH domain; the sequence is LTFVGYQDKD…YAKVPKMSMS (307 aa). The product template (PT) domain stretch occupies residues 1323 to 1600; it reads LVSGHLIAQT…INYAKVPKMS (278 aa). The active-site Proton acceptor; for dehydratase activity is histidine 1327. Residues 1454–1602 form a C-terminal hotdog fold region; it reads ADDIIQGRNI…YAKVPKMSMS (149 aa). The active-site Proton donor; for dehydratase activity is aspartate 1510. The region spanning 1657–1731 is the Carrier 1 domain; it reads PDISGKVRAM…GLLRCIQEAL (75 aa). O-(pantetheine 4'-phosphoryl)serine is present on serine 1691. Residues 1731-1764 form a disordered region; the sequence is LGPSEGVEEETDNEEGEDGESSENPSVFTPSDAA. A compositionally biased stretch (acidic residues) spans 1736-1751; it reads GVEEETDNEEGEDGES. Polar residues predominate over residues 1755 to 1764; the sequence is PSVFTPSDAA. Positions 1768–1842 constitute a Carrier 2 domain; it reads SSAKADVAEF…EFDVKVNGKS (75 aa). Serine 1802 is subject to O-(pantetheine 4'-phosphoryl)serine. Positions 1948-2255 are methyltransferase domain; it reads QTLERIKYLP…EVNIQRIFLA (308 aa). Residues 2320 to 2564 form the Thioester reductase (TE) domain; it reads VTGATGSLGS…LSWTPVNDVA (245 aa).

Pantetheine 4'-phosphate is required as a cofactor.

The protein operates within secondary metabolite biosynthesis. In terms of biological role, non-reducing polyketide synthase; part of the gene cluster that mediates the biosynthesis of azaphilone pigments (MonAzPs), a complex mixture of compounds with a common azaphilone skeleton very widely used as food colorants. PigA catalyzes the first step of MonAzPs biosynthesis and forms the hexaketide precursor from successive condensations of five malonyl-CoA units, with a simple acetyl-CoA starter unit. The starter acyl transferase (SAT) domain of pigA selects an acetyl-CoA starter unit, and the ketoacyl synthase (KS)-acyl transferase (AT)-acyl carrier protein (ACP) domains extend this starter unit five times with malonyl-CoA in five successive decarboxylative Claisen condensation cycles. The methyltransferase (MT) domain conducts a single C-methylation at C-4, most likely at the pentaketide stage. The reactive hexaketide chain then undergoes a product template (PT) domain-mediated C-2 to C-7 aldol cyclization to afford the first aromatic ring, followed by reductive release of the first pathway intermediate by the NADPH-dependent reductive release (R) domain. The role of esterase pigG is not clear, but it may play at most a supplementary role in the formation of the benzaldehyde produced by the pigA nrPKS. This very reactive benzaldehyde is intercepted by the pigC ketoreductase that to provide the first stable enzyme-free MonAzPs intermediate, 6-(4-hydroxy-2-oxopentyl)-3-methyl-2,4-dioxocyclohexane carbaldehyde, also known as M7PKS-1. The FAD-dependent monooxygenase pigN hydroxylates M7PKS-1 at C-4, which triggers the formation of the pyran ring. PigJ, pigK and pigD are involved in the acetylation of the pyran ring. PigJ and pigK form the two subunits of a dedicated fungal FAS that produces the side chain fatty acyl moiety of MonAzPs and pigD transfers the fatty acyl chain to the C-4 alcohol. PigM and pigO are involved in the elimination of the omega-1 alcohol. PigM acts as an O-acetyltransferase that synthesizes the putative O-11 acetyl intermediate whereas pigO eliminates acetic acid to yield an intermediate with a C10(11) double bond. The dehydration of the C-11 alcohol followed by the reduction of the C6(7) double bond by the NAD(P)H-dependent oxidoreductase pigE increases the electrophilicity of the C-5 ketone of the resulting acyl benzopyran. This in turn sets up the C-5 ketone for an intramolecular Knoevenagel aldol condensation with the C-20 enol of the side chain. This condensation affords the characteristic linear tricyclic carbon skeletons of the yellow pigments that serve as the common precursors for the classical yellow pigments monascin and ankaflavin, orange pigments rubopunctatin and monascorubrin, and red pigments ribropunctamine and monascorubramine. The FAD-dependent oxidoreductase pigF is especially invoved in the biosynthesis of orange and red pigments via desaturation of C6(7). The sequence is that of Non-reducing polyketide synthase pigA from Monascus ruber (Mold).